Here is a 90-residue protein sequence, read N- to C-terminus: Alpha-latrotoxin associated low molecular weight protein (90 aa).

A signal peptide spans 1–18 (MNKLFFVVFLCLIISVLA).

The protein belongs to the arthropod CHH/MIH/GIH/VIH hormone family. As to expression, expressed by the venom gland.

It localises to the secreted. In terms of biological role, may increase the toxicity of alpha-latrotoxin and/or other venom components. Is non-toxic to mice and to the cockroach Periplaneta americana. The sequence is that of Alpha-latrotoxin associated low molecular weight protein from Latrodectus geometricus (Brown widow spider).